The sequence spans 572 residues: Urease subunit alpha (572 aa).

In terms of domain architecture, Urease spans 133–572 (GGIDLHVHYI…TSLSQRYFLF (440 aa)). Ni(2+) contacts are provided by histidine 138, histidine 140, and lysine 221. An N6-carboxylysine modification is found at lysine 221. Substrate is bound at residue histidine 223. Ni(2+)-binding residues include histidine 250 and histidine 276. Catalysis depends on histidine 324, which acts as the Proton donor. Residue aspartate 364 participates in Ni(2+) binding.

This sequence belongs to the metallo-dependent hydrolases superfamily. Urease alpha subunit family. As to quaternary structure, heterotrimer of UreA (gamma), UreB (beta) and UreC (alpha) subunits. Three heterotrimers associate to form the active enzyme. Ni cation serves as cofactor. Post-translationally, carboxylation allows a single lysine to coordinate two nickel ions.

The protein resides in the cytoplasm. It carries out the reaction urea + 2 H2O + H(+) = hydrogencarbonate + 2 NH4(+). It functions in the pathway nitrogen metabolism; urea degradation; CO(2) and NH(3) from urea (urease route): step 1/1. This is Urease subunit alpha from Streptococcus thermophilus (strain CNRZ 1066).